A 465-amino-acid polypeptide reads, in one-letter code: Uronate isomerase (465 aa).

It belongs to the metallo-dependent hydrolases superfamily. Uronate isomerase family.

It catalyses the reaction D-glucuronate = D-fructuronate. The enzyme catalyses aldehydo-D-galacturonate = keto-D-tagaturonate. It participates in carbohydrate metabolism; pentose and glucuronate interconversion. The protein is Uronate isomerase of Streptococcus equi subsp. equi (strain 4047).